A 430-amino-acid polypeptide reads, in one-letter code: Tol-Pal system protein TolB (430 aa).

The N-terminal stretch at 1 to 21 is a signal peptide; sequence MKQAFRVALGFLILWASVLHA.

It belongs to the TolB family. The Tol-Pal system is composed of five core proteins: the inner membrane proteins TolA, TolQ and TolR, the periplasmic protein TolB and the outer membrane protein Pal. They form a network linking the inner and outer membranes and the peptidoglycan layer.

It localises to the periplasm. Functionally, part of the Tol-Pal system, which plays a role in outer membrane invagination during cell division and is important for maintaining outer membrane integrity. TolB occupies a key intermediary position in the Tol-Pal system because it communicates directly with both membrane-embedded components, Pal in the outer membrane and TolA in the inner membrane. This Serratia proteamaculans (strain 568) protein is Tol-Pal system protein TolB.